The chain runs to 428 residues: Phosphoribosylamine--glycine ligase (428 aa).

Residues 109-316 (KDFLHRHGIP…LVELCLAALD (208 aa)) form the ATP-grasp domain. Residue 135-196 (LRQVGAPVVV…EEFLTGEEAS (62 aa)) coordinates ATP. Residues 211–235 (SSQDHKARDDGDRGPNTGGMGAYSP) form a disordered region. Over residues 213-223 (QDHKARDDGDR) the composition is skewed to basic and acidic residues. 2 residues coordinate Mg(2+): E286 and N288.

It belongs to the GARS family. Requires Mg(2+) as cofactor. It depends on Mn(2+) as a cofactor.

It carries out the reaction 5-phospho-beta-D-ribosylamine + glycine + ATP = N(1)-(5-phospho-beta-D-ribosyl)glycinamide + ADP + phosphate + H(+). The protein operates within purine metabolism; IMP biosynthesis via de novo pathway; N(1)-(5-phospho-D-ribosyl)glycinamide from 5-phospho-alpha-D-ribose 1-diphosphate: step 2/2. This Allochromatium vinosum (strain ATCC 17899 / DSM 180 / NBRC 103801 / NCIMB 10441 / D) (Chromatium vinosum) protein is Phosphoribosylamine--glycine ligase (purD).